Here is a 357-residue protein sequence, read N- to C-terminus: Fructose-1,6-bisphosphatase class 1 2 (357 aa).

Positions 90, 112, 114, and 115 each coordinate Mg(2+). Substrate is bound by residues 115-118 and asparagine 206; that span reads DGSS. Residue glutamate 278 participates in Mg(2+) binding.

It belongs to the FBPase class 1 family. Homotetramer. The cofactor is Mg(2+).

The protein resides in the cytoplasm. It catalyses the reaction beta-D-fructose 1,6-bisphosphate + H2O = beta-D-fructose 6-phosphate + phosphate. It functions in the pathway carbohydrate biosynthesis; gluconeogenesis. In Dechloromonas aromatica (strain RCB), this protein is Fructose-1,6-bisphosphatase class 1 2.